The chain runs to 119 residues: Ribonuclease P protein component (119 aa).

It belongs to the RnpA family. In terms of assembly, consists of a catalytic RNA component (M1 or rnpB) and a protein subunit.

It carries out the reaction Endonucleolytic cleavage of RNA, removing 5'-extranucleotides from tRNA precursor.. In terms of biological role, RNaseP catalyzes the removal of the 5'-leader sequence from pre-tRNA to produce the mature 5'-terminus. It can also cleave other RNA substrates such as 4.5S RNA. The protein component plays an auxiliary but essential role in vivo by binding to the 5'-leader sequence and broadening the substrate specificity of the ribozyme. The sequence is that of Ribonuclease P protein component from Streptococcus equi subsp. equi (strain 4047).